The sequence spans 331 residues: 6-phosphogluconolactonase (331 aa).

It belongs to the cycloisomerase 2 family.

It catalyses the reaction 6-phospho-D-glucono-1,5-lactone + H2O = 6-phospho-D-gluconate + H(+). Its pathway is carbohydrate degradation; pentose phosphate pathway; D-ribulose 5-phosphate from D-glucose 6-phosphate (oxidative stage): step 2/3. Functionally, catalyzes the hydrolysis of 6-phosphogluconolactone to 6-phosphogluconate. The protein is 6-phosphogluconolactonase of Klebsiella pneumoniae (strain 342).